The sequence spans 107 residues: Phosphoribosyl-ATP pyrophosphatase (107 aa).

It belongs to the PRA-PH family.

The protein localises to the cytoplasm. It catalyses the reaction 1-(5-phospho-beta-D-ribosyl)-ATP + H2O = 1-(5-phospho-beta-D-ribosyl)-5'-AMP + diphosphate + H(+). It functions in the pathway amino-acid biosynthesis; L-histidine biosynthesis; L-histidine from 5-phospho-alpha-D-ribose 1-diphosphate: step 2/9. The protein is Phosphoribosyl-ATP pyrophosphatase of Bacillus cereus (strain AH187).